Reading from the N-terminus, the 115-residue chain is Double-headed protease inhibitor, submandibular gland (115 aa).

Kazal-like domains are found at residues 6–66 (IGRE…ACDI) and 67–115 (ECTE…HGEC). Disulfide bonds link C12–C46, C24–C43, C32–C64, C68–C97, C75–C94, and C83–C115.

The protein localises to the secreted. Functionally, this inhibitor is composed of two homologous actively inhibiting halves: one which inhibits trypsin, the other which inhibits elastase. The protein is Double-headed protease inhibitor, submandibular gland of Canis lupus familiaris (Dog).